A 200-amino-acid polypeptide reads, in one-letter code: Holliday junction branch migration complex subunit RuvA (200 aa).

Positions 1–64 (MIGHLRGIIV…EDAHTLYGFH (64 aa)) are domain I. The interval 65–143 (NDHERRLFRA…RWHTNDTPSP (79 aa)) is domain II. The segment at 133 to 152 (SRWHTNDTPSPEGLRSSNTQ) is disordered. Residues 144-148 (EGLRS) are flexible linker. Positions 149–200 (SNTQPTQDAISALMALGYKPQEAKRAIDAIQKPDLSAETLIRLALKQMVLGT) are domain III.

It belongs to the RuvA family. In terms of assembly, homotetramer. Forms an RuvA(8)-RuvB(12)-Holliday junction (HJ) complex. HJ DNA is sandwiched between 2 RuvA tetramers; dsDNA enters through RuvA and exits via RuvB. An RuvB hexamer assembles on each DNA strand where it exits the tetramer. Each RuvB hexamer is contacted by two RuvA subunits (via domain III) on 2 adjacent RuvB subunits; this complex drives branch migration. In the full resolvosome a probable DNA-RuvA(4)-RuvB(12)-RuvC(2) complex forms which resolves the HJ.

The protein resides in the cytoplasm. Its function is as follows. The RuvA-RuvB-RuvC complex processes Holliday junction (HJ) DNA during genetic recombination and DNA repair, while the RuvA-RuvB complex plays an important role in the rescue of blocked DNA replication forks via replication fork reversal (RFR). RuvA specifically binds to HJ cruciform DNA, conferring on it an open structure. The RuvB hexamer acts as an ATP-dependent pump, pulling dsDNA into and through the RuvAB complex. HJ branch migration allows RuvC to scan DNA until it finds its consensus sequence, where it cleaves and resolves the cruciform DNA. This is Holliday junction branch migration complex subunit RuvA from Coxiella burnetii (strain CbuK_Q154) (Coxiella burnetii (strain Q154)).